Here is a 126-residue protein sequence, read N- to C-terminus: MAVMGLGTDIIEIGRIEKQLTRSHRLAQRVLTATELAIFDEHSFPARYLAKRFAAKEAAVKALGIGIGNGISFQDVEVHNLPSGQPFLKFYAKFAQLCEQRNITSSHISISDEQHYAIATVILESP.

2 residues coordinate Mg(2+): aspartate 9 and glutamate 57.

It belongs to the P-Pant transferase superfamily. AcpS family. Mg(2+) is required as a cofactor.

The protein localises to the cytoplasm. The enzyme catalyses apo-[ACP] + CoA = holo-[ACP] + adenosine 3',5'-bisphosphate + H(+). Its function is as follows. Transfers the 4'-phosphopantetheine moiety from coenzyme A to a Ser of acyl-carrier-protein. This is Holo-[acyl-carrier-protein] synthase from Pseudoalteromonas atlantica (strain T6c / ATCC BAA-1087).